The sequence spans 847 residues: DNA ligase (847 aa).

Residues 1–22 (MSDTTTGSDAADAAVPATTPAD) are compositionally biased toward low complexity. A disordered region spans residues 1 to 23 (MSDTTTGSDAADAAVPATTPADL). Residues 54-58 (DAEYD), 104-105 (SL), and glutamate 135 each bind NAD(+). Catalysis depends on lysine 137, which acts as the N6-AMP-lysine intermediate. NAD(+)-binding residues include arginine 158, glutamate 195, lysine 326, and lysine 350. The Zn(2+) site is built by cysteine 444, cysteine 447, cysteine 463, and cysteine 469. A BRCT domain is found at 686 to 775 (AAGGVLAGLA…PDAIALPEAD (90 aa)). Residues 770–847 (ALPEADPVPD…AEPDGPAETP (78 aa)) form a disordered region. Low complexity-rich tracts occupy residues 786 to 807 (DGGSAEDATAATAGAAEAATAE) and 819 to 833 (PAAAAAAPPTDVEAG).

The protein belongs to the NAD-dependent DNA ligase family. LigA subfamily. Mg(2+) is required as a cofactor. Mn(2+) serves as cofactor.

The enzyme catalyses NAD(+) + (deoxyribonucleotide)n-3'-hydroxyl + 5'-phospho-(deoxyribonucleotide)m = (deoxyribonucleotide)n+m + AMP + beta-nicotinamide D-nucleotide.. Its function is as follows. DNA ligase that catalyzes the formation of phosphodiester linkages between 5'-phosphoryl and 3'-hydroxyl groups in double-stranded DNA using NAD as a coenzyme and as the energy source for the reaction. It is essential for DNA replication and repair of damaged DNA. This chain is DNA ligase, found in Clavibacter sepedonicus (Clavibacter michiganensis subsp. sepedonicus).